The chain runs to 705 residues: Complement C1r subcomponent (705 aa).

An N-terminal signal peptide occupies residues Met-1–Gly-17. Residues Ser-18 to Val-141 enclose the CUB 1 domain. Residues Glu-66, Asp-74, and Asp-119 each contribute to the Ca(2+) site. Residues Cys-71 and Cys-89 are joined by a disulfide bond. Asn-125 carries N-linked (GlcNAc...) asparagine glycosylation. The Ca(2+) site is built by Asp-142, Leu-143, and Glu-145. The region spanning Asp-142–Gln-190 is the EGF-like; calcium-binding domain. 4 disulfide bridges follow: Cys-146–Cys-165, Cys-161–Cys-174, Cys-176–Cys-189, and Cys-193–Cys-220. The Ca(2+) site is built by Asn-167, Tyr-168, and Gly-171. A (3R)-3-hydroxyasparagine modification is found at Asn-167. The CUB 2 domain occupies Cys-193 to Glu-305. Phosphoserine; by CK2 is present on Ser-206. Asn-221 is a glycosylation site (N-linked (GlcNAc...) asparagine). Residues Asp-243, Asp-253, Asp-290, and Asp-294 each coordinate Ca(2+). Cys-250 and Cys-268 are disulfide-bonded. Sushi domains are found at residues Ile-307 to Ile-373 and Lys-374 to Pro-449. Cystine bridges form between Cys-309–Cys-358, Cys-338–Cys-371, Cys-376–Cys-429, Cys-406–Cys-447, and Cys-451–Cys-577. Residues Ile-464–Glu-702 enclose the Peptidase S1 domain. His-502 (charge relay system) is an active-site residue. The N-linked (GlcNAc...) asparagine glycan is linked to Asn-514. The Charge relay system role is filled by Asp-557. Asn-581 carries an N-linked (GlcNAc...) asparagine glycan. 2 disulfide bridges follow: Cys-620-Cys-639 and Cys-650-Cys-680. Ser-654 functions as the Charge relay system in the catalytic mechanism.

This sequence belongs to the peptidase S1 family. As to quaternary structure, core component of the complement C1 complex, a calcium-dependent complex composed of 1 molecule of the C1Q subcomplex, 2 molecules of C1R and 2 molecules of C1S. The C1Q subcomplex is composed 18 subunits: 3 chains of C1QA, C1QB, and C1QC trimerize to form 6 collagen-like triple helices connected to six globular ligand-recognition modules. Within the C1 complex, C1R is a dimer of identical chains, each of which is activated by cleavage into two chains, heavy and light, connected by disulfide bonds. Post-translationally, cleaved and activated by autocatalytic processing to generate Complement C1r subcomponent heavy and light chains that are connected by disulfide bonds. The iron and 2-oxoglutarate dependent 3-hydroxylation of aspartate and asparagine is (R) stereospecific within EGF domains.

It localises to the secreted. The protein resides in the cell surface. It carries out the reaction Selective cleavage of Lys(or Arg)-|-Ile bond in complement subcomponent C1s to form the active form of C1s (EC 3.4.21.42).. Activated by the C1Q subcomplex of the C1 complex following C1Q binding to immunoglobulins (IgG or IgM) complexed with antigens to form antigen-antibody complexes on the surface of pathogens. Immunoglobulin-binding promotes autoactivation of C1R, which results in the cleavage of the Arg-Ile bond in the catalytic domain. In terms of biological role, serine protease component of the complement C1 complex, a multiprotein complex that initiates the classical pathway of the complement system, a cascade of proteins that leads to phagocytosis and breakdown of pathogens and signaling that strengthens the adaptive immune system. C1R catalyzes the first enzymatic step in the classical complement pathway: it is activated by the C1Q subcomplex of the C1 complex, which associates with IgG or IgM immunoglobulins complexed with antigens to form antigen-antibody complexes on the surface of pathogens. Immunoglobulin-binding promotes the autocatalytic cleavage and activation of C1R. Activated C1R then cleaves and activates C1S, the second protease of the classical complement pathway. It is unclear if C1R activates C1S within single, strained C1 complexes or between neighboring C1 complexes on surfaces. This is Complement C1r subcomponent from Homo sapiens (Human).